The following is a 174-amino-acid chain: Nucleoside-triphosphatase THEP1 (174 aa).

Residues 7–14 (GRPGSGKS) and 98–105 (CIIIDEIG) contribute to the ATP site.

This sequence belongs to the THEP1 NTPase family.

The catalysed reaction is a ribonucleoside 5'-triphosphate + H2O = a ribonucleoside 5'-diphosphate + phosphate + H(+). Has nucleotide phosphatase activity towards ATP, GTP, CTP, TTP and UTP. May hydrolyze nucleoside diphosphates with lower efficiency. In Methanothermobacter thermautotrophicus (strain ATCC 29096 / DSM 1053 / JCM 10044 / NBRC 100330 / Delta H) (Methanobacterium thermoautotrophicum), this protein is Nucleoside-triphosphatase THEP1.